Here is a 316-residue protein sequence, read N- to C-terminus: WEB family protein At3g13190 (316 aa).

Coiled-coil stretches lie at residues 42–90 (WNKE…MIND), 119–195 (EEES…AEEH), and 233–266 (RDET…MAQE). The tract at residues 295 to 316 (STKEVLKSKPRSSSKEGCLVKC) is disordered.

It belongs to the WEB family.

In Arabidopsis thaliana (Mouse-ear cress), this protein is WEB family protein At3g13190.